Consider the following 441-residue polypeptide: MSRKYLLSLLLVGALVISVVASGCIGGSQTPTSSPTKTQQVQELEIYHWWTAGGEKEAFDALAKKFEKKYPNIKIKANPVSGGGGVNLKMVLQSLMLAGKPPDTFQVHAGYEMARYIKANQLTPIDDIWTEDMKKNYPKVIQQMVIFNNHYYAVPINVHRANVIWYNKQIFKKYGIDPSSIKTIDDLFAVAEKLKENGVTPFALGDRNKWPATQVFEVMLVAVGGVDYYEKFINGEISANDPTLKKVLEYFVKYVEYSNPDHAAKTWDEACALVYKGEAAMTLMGDWANGYFKAKGWKPNVDYGAIPIPAGVYDLVIDTFVLPAKAAHPNAAKKWLSFIGTVEAQNTFNPIKGSIPPRKDAPADPYDPIQKSFIKELSSSETKLIPSIAHGSAVPEAFLADLNDIISELATSKDVNKAATEIINAMKKDLLPNKIKEWHLS.

The signal sequence occupies residues 1–23 (MSRKYLLSLLLVGALVISVVASG). C24 carries the post-translational modification N-acetylcysteine. C24 carries S-archaeol cysteine lipidation.

This sequence belongs to the bacterial solute-binding protein 1 family.

The protein resides in the cell membrane. Functionally, probably part of a binding-protein-dependent transport system PH1214/15/16. This is an uncharacterized protein from Pyrococcus horikoshii (strain ATCC 700860 / DSM 12428 / JCM 9974 / NBRC 100139 / OT-3).